The primary structure comprises 221 residues: Ras-related protein RABA5a (221 aa).

GTP is bound at residue 21–28; the sequence is GDSAVGKS. The Effector region signature appears at 43–51; the sequence is SKSTIGVEF. Residues 69–73, 127–130, and 157–158 contribute to the GTP site; these read DTAGQ, NKSD, and SA. Residues C218 and C219 are each lipidated (S-geranylgeranyl cysteine).

The protein belongs to the small GTPase superfamily. Rab family.

Its subcellular location is the cell membrane. Functionally, intracellular vesicle trafficking and protein transport. This chain is Ras-related protein RABA5a (RABA5A), found in Arabidopsis thaliana (Mouse-ear cress).